A 187-amino-acid chain; its full sequence is Large ribosomal subunit protein uL22 (187 aa).

2 stretches are compositionally biased toward basic and acidic residues: residues 158 to 168 (TKATDESEQAK) and 178 to 187 (RQKEKMMRNE). The disordered stretch occupies residues 158–187 (TKATDESEQAKKKLSKKKLQRQKEKMMRNE).

This sequence belongs to the universal ribosomal protein uL22 family.

The protein is Large ribosomal subunit protein uL22 (RpL17) of Anopheles gambiae (African malaria mosquito).